The following is a 1170-amino-acid chain: MTPIPYAEIGVTTNFSFLHGGSHPQAYVHQAAEYGLTAIGIADHNTLAGIVRAYSELSNDQLGYRPKLLYGARLVFTCGTPDILVYPRDRAAYGRLCQLLTRGKRGSDLDKVAKGDCRLAFEDLFDFIAGQLLVLMPPHRFDEDALGAILARLKDSPAEGVWLAGSLLYRGDDRRRLARLARLAASAKVPLIATNDVLYHHPQQRMLQDVLTCIREKASIESIGRRLQANAERHLKPGHEMARLFRDHPEAIAETLRFTDRIVFSLDQLKYQYPDEPVPPGKTAQGHLEDLTWAGAKTYFGDKLDDRLRAVLNKELALIAELNYAHYFLTVHDIVRYARSEGILCQGRGSAANSAVCYVLGITSVDPTKIDLLFERFISKERLEPPDIDVDFEHSRREEVMQYVYHRYGRHRAAIIATVIHYRPRSAIRDVGKALGLTEDVTSVLADTVWGSWGDGLSDMQVRQAGLDPHNPMIRRAVELASELITFPRHLSQHVGGYVLTQDRLDSYVPIGNAAMDDRTFIEWDKDDVDALSMMKVDVLALGMLTCIRKSFDLIADHKGRRYVLSDIKSEDDNEVYQMLQRGESLGVFQVESRAQMNMLPRLKPRTFYDLVIEVAIVRPGPIQGDMVHPYLRRRNKLEKVTYPSPSPDHGPSDELYKVLHKTLGVPLFQEQAMRIAIEAAKFSPEEANGLRRAMATFRNVGTIGSYEEKMVSNMIARGYDPAFAKSCFDQIKGFGSYGFPESHAASFAQLVYVSSWLKYFHPDAFCCALLNSQPMGFYAPAQIVGDARKNGVEIRDIDVSHSFADNTLEKTDGEYCAVRLGFRQIDGFRWIDRDEERIRKLSEAVRKEALSVSTRSLPAISPVSFRGARSANPESRDSGFALRAPRNDNDRQIPLHNDDREDDWADRIIRARQRRPFTSLEDFARDTALPKRALLLLADADAFRSLGLDRRAALWAVRRLPDDVPLPLFEAAIAREQPDEGAQPLPEMPLPEHVVADYQTIRLSLKGHPMEFLRRRFAAEGVLACRDVNDTNDRRRIRCAGVVLVRQRPGSAKGVVFMTLEDETGIANIVVWPKVMETFRKEVMGARLVLVEGRIQSSPEKVVHLVAERLVDRTADLTLLSDDRLDAIPHGATPAEPLNDDRRDHTDNPSQRVSHPRNVRILPRSRDFH.

Disordered stretches follow at residues 867–899 (RGARSANPESRDSGFALRAPRNDNDRQIPLHND) and 1129–1170 (IPHG…RDFH). A compositionally biased stretch (basic and acidic residues) spans 886–899 (PRNDNDRQIPLHND).

Belongs to the DNA polymerase type-C family. DnaE2 subfamily.

The protein localises to the cytoplasm. The enzyme catalyses DNA(n) + a 2'-deoxyribonucleoside 5'-triphosphate = DNA(n+1) + diphosphate. In terms of biological role, DNA polymerase involved in damage-induced mutagenesis and translesion synthesis (TLS). It is not the major replicative DNA polymerase. The chain is Error-prone DNA polymerase from Bradyrhizobium sp. (strain ORS 278).